The primary structure comprises 350 residues: C5a anaphylatoxin chemotactic receptor 1 (350 aa).

At 1-37 the chain is on the extracellular side; it reads MDDMCSILTEEELSLYNITDCEFVKPGGLGPVLGPRH. N17 is a glycosylation site (N-linked (GlcNAc...) asparagine). The helical transmembrane segment at 38–64 threads the bilayer; that stretch reads LSALVFYGLVFLLGVPGNALVVWVTGF. Over 65–69 the chain is Cytoplasmic; the sequence is RMPRS. The helical transmembrane segment at 70–93 threads the bilayer; that stretch reads VTSLWFLNLALADLLCCLSLPLLM. The Extracellular portion of the chain corresponds to 94–110; sequence VPLAMDQHWPFGPVACK. A disulfide bridge links C109 with C187. A helical membrane pass occupies residues 111–132; sequence LLKGLLYLIMFCSVLLLVLISL. The Cytoplasmic segment spans residues 133–154; it reads DRFLLVSWPVWCQNWRRPRKAG. The chain crosses the membrane as a helical span at residues 155-174; it reads WVCVGVWLLALLGSIPQFVY. Over 175–197 the chain is Extracellular; the sequence is VKEVQLSTSKSECLGLYTVASAW. The chain crosses the membrane as a helical span at residues 198–223; the sequence is ANTTARFLVGFVLPFITIVTCHWVVY. The Cytoplasmic portion of the chain corresponds to 224-247; it reads SRARRGSGVGPGRVSEARSRRTLR. Residues 248 to 270 form a helical membrane-spanning segment; that stretch reads VIVAVSLSFFLCWFPLHILDFLV. Residues 271 to 287 lie on the Extracellular side of the membrane; the sequence is LSTPRHSSHSANIQLAH. The helical transmembrane segment at 288–308 threads the bilayer; that stretch reads TLALCLAYCNSCLNPLLYVCL. Topologically, residues 309–350 are cytoplasmic; it reads GRGFKQNINRSLRNMFNFATEESVTRQSMFKSTSERTQEMNM.

The protein belongs to the G-protein coupled receptor 1 family. High expression in head, kidney and posterior kidney, lower levels in peripheral blood leukocytes and spleen, low expression in brain and gills, heart, intestine and very low expression in liver and muscle.

It localises to the cell membrane. Its function is as follows. Receptor for the chemotactic and inflammatory peptide anaphylatoxin C5a. This receptor stimulates chemotaxis, granule enzyme release and superoxide anion production. The sequence is that of C5a anaphylatoxin chemotactic receptor 1 (c5ar1) from Oncorhynchus mykiss (Rainbow trout).